We begin with the raw amino-acid sequence, 102 residues long: Noncompact myelin-associated protein (102 aa).

Residues 1–30 are Extracellular-facing; that stretch reads MTTATPLGDTTFFSLNMTTRGEDFLYKSSG. Residues 31–51 form a helical membrane-spanning segment; the sequence is AIVAAVVVVVIIIFTVVLILL. Over 52–102 the chain is Cytoplasmic; the sequence is KMYNRKMRTRRELEPKGPKPTAPSAVGPNSNGSQHPATVTFSPVDVQVETR. Residues 60 to 102 are disordered; it reads TRRELEPKGPKPTAPSAVGPNSNGSQHPATVTFSPVDVQVETR. Residues 78–92 are compositionally biased toward polar residues; it reads GPNSNGSQHPATVTF.

Glycosylated.

It localises to the cell membrane. Plays a role in myelin formation. The sequence is that of Noncompact myelin-associated protein (NCMAP) from Homo sapiens (Human).